Consider the following 525-residue polypeptide: 2,3-bisphosphoglycerate-independent phosphoglycerate mutase (525 aa).

Mn(2+) contacts are provided by Asp-15 and Ser-65. The active-site Phosphoserine intermediate is Ser-65. Substrate contacts are provided by residues His-126, 156 to 157, Arg-188, Arg-194, 258 to 261, and Lys-331; these read RD and RPDR. Mn(2+)-binding residues include Asp-398, His-402, Asp-439, His-440, and His-457.

The protein belongs to the BPG-independent phosphoglycerate mutase family. As to quaternary structure, monomer. Requires Mn(2+) as cofactor.

The catalysed reaction is (2R)-2-phosphoglycerate = (2R)-3-phosphoglycerate. It participates in carbohydrate degradation; glycolysis; pyruvate from D-glyceraldehyde 3-phosphate: step 3/5. In terms of biological role, catalyzes the interconversion of 2-phosphoglycerate and 3-phosphoglycerate. The chain is 2,3-bisphosphoglycerate-independent phosphoglycerate mutase from Picosynechococcus sp. (strain ATCC 27264 / PCC 7002 / PR-6) (Agmenellum quadruplicatum).